The primary structure comprises 163 residues: Nucleotide-binding protein EAT1b_2037 (163 aa).

Belongs to the YajQ family.

Functionally, nucleotide-binding protein. In Exiguobacterium sp. (strain ATCC BAA-1283 / AT1b), this protein is Nucleotide-binding protein EAT1b_2037.